The primary structure comprises 131 residues: Holo-[acyl-carrier-protein] synthase (131 aa).

Residues aspartate 8 and glutamate 62 each contribute to the Mg(2+) site.

It belongs to the P-Pant transferase superfamily. AcpS family. Mg(2+) is required as a cofactor.

The protein resides in the cytoplasm. The catalysed reaction is apo-[ACP] + CoA = holo-[ACP] + adenosine 3',5'-bisphosphate + H(+). Transfers the 4'-phosphopantetheine moiety from coenzyme A to a Ser of acyl-carrier-protein. The chain is Holo-[acyl-carrier-protein] synthase from Delftia acidovorans (strain DSM 14801 / SPH-1).